Here is a 277-residue protein sequence, read N- to C-terminus: Sulfur carrier protein FdhD (277 aa).

The active-site Cysteine persulfide intermediate is C121. A Mo-bis(molybdopterin guanine dinucleotide)-binding site is contributed by 260–265 (FCKPGR).

Belongs to the FdhD family.

The protein localises to the cytoplasm. In terms of biological role, required for formate dehydrogenase (FDH) activity. Acts as a sulfur carrier protein that transfers sulfur from IscS to the molybdenum cofactor prior to its insertion into FDH. The sequence is that of Sulfur carrier protein FdhD from Shigella dysenteriae serotype 1 (strain Sd197).